A 620-amino-acid chain; its full sequence is Hemagglutinin glycoprotein (620 aa).

The Intravirion portion of the chain corresponds to 1-37 (MSPQRDRTNAFYKDNPHPKGSRIVINREHLMIDRPYV). The interval 1–154 (MSPQRDRTNA…RIKLDYDQYC (154 aa)) is stalk. A helical; Signal-anchor for type II membrane protein membrane pass occupies residues 38–58 (LLAILFVMFLSLIGLLAIAGI). At 59 to 620 (RLHQAAIHTA…EDGTNRRQSC (562 aa)) the chain is on the virion surface side. Residues Asn-168, Asn-187, Asn-200, Asn-215, and Asn-238 are each glycosylated (N-linked (GlcNAc...) asparagine; by host). 5 disulfides stabilise this stretch: Cys-188-Cys-606, Cys-287-Cys-300, Cys-381-Cys-494, Cys-386-Cys-394, and Cys-570-Cys-579. The segment at 458–543 (PMKNLALGVI…VEHAVVYYVY (86 aa)) is interaction with host NECTIN4 receptor.

It belongs to the paramyxoviruses hemagglutinin-neuraminidase family. Non-sialidase subfamily. In terms of assembly, homodimer; disulfide-linked. Further forms homotetramer (dimer of dimers). Interacts (via C-terminus) with human NECTIN4 (via N-terminus); this interaction allows attachment to the respiratory epithelium and viral entry. Interacts (via C-terminus) with human SLAMF1/CD150 (via N-terminus); this interaction allows attachment and viral entry into the CD150-expressing immune cells.

The protein localises to the virion membrane. It localises to the host cell membrane. In terms of biological role, attaches the virus to the human SLAMF1/CD150 receptor for entry into host dendritic cells, macrophages, activated memory T cells and naive or memory B cells, thereby explaining the long immunosuppression that follows infection. In the respiratory airways, binds to the NECTIN4 receptor for entry into the host cell. Binding of H protein to the receptor induces a conformational change that allows the F protein to trigger virion/cell membranes fusion. The protein is Hemagglutinin glycoprotein (H) of Homo sapiens (Human).